The primary structure comprises 120 residues: Glycine cleavage system H protein (120 aa).

One can recognise a Lipoyl-binding domain in the interval 17 to 99 (VATVGITTYA…QGAGWFFKLK (83 aa)). Lys58 is modified (N6-lipoyllysine).

This sequence belongs to the GcvH family. As to quaternary structure, the glycine cleavage system is composed of four proteins: P, T, L and H. It depends on (R)-lipoate as a cofactor.

Its function is as follows. The glycine cleavage system catalyzes the degradation of glycine. The H protein shuttles the methylamine group of glycine from the P protein to the T protein. The chain is Glycine cleavage system H protein from Rhizobium etli (strain CIAT 652).